The chain runs to 128 residues: uncharacterized protein (128 aa).

2 disordered regions span residues 1 to 53 and 85 to 105; these read MHLP…PKGR and PDGP…SGPL.

This is an uncharacterized protein from Escherichia coli.